The chain runs to 118 residues: Holo-[acyl-carrier-protein] synthase (118 aa).

The Mg(2+) site is built by Asp-8 and Glu-58.

The protein belongs to the P-Pant transferase superfamily. AcpS family. It depends on Mg(2+) as a cofactor.

The protein localises to the cytoplasm. It catalyses the reaction apo-[ACP] + CoA = holo-[ACP] + adenosine 3',5'-bisphosphate + H(+). Functionally, transfers the 4'-phosphopantetheine moiety from coenzyme A to a Ser of acyl-carrier-protein. The protein is Holo-[acyl-carrier-protein] synthase of Lactobacillus helveticus (strain DPC 4571).